Reading from the N-terminus, the 1144-residue chain is Alpha-mannosidase 2 (1144 aa).

The Cytoplasmic portion of the chain corresponds to 1–5 (MKLSR). A helical; Signal-anchor for type II membrane protein membrane pass occupies residues 6–26 (QFTVFGSAIFCVVIFSLYLML). Topologically, residues 27–1144 (DRGHLDYPRN…EISTFRIQLR (1118 aa)) are lumenal. Residue asparagine 78 is glycosylated (N-linked (GlcNAc...) asparagine). A phosphoserine mark is found at serine 80 and serine 82. N-linked (GlcNAc...) asparagine glycosylation occurs at asparagine 93. The Zn(2+) site is built by histidine 175, aspartate 177, aspartate 289, and histidine 569. Aspartate 289 acts as the Nucleophile in catalysis. N-linked (GlcNAc...) asparagine glycosylation is present at asparagine 1125.

Belongs to the glycosyl hydrolase 38 family. In terms of assembly, homodimer; disulfide-linked. It depends on Zn(2+) as a cofactor. Post-translationally, glycosylated.

The protein resides in the golgi apparatus membrane. It carries out the reaction N(4)-{beta-D-GlcNAc-(1-&gt;2)-alpha-D-Man-(1-&gt;3)-[alpha-D-Man-(1-&gt;3)-[alpha-D-Man-(1-&gt;6)]-alpha-D-Man-(1-&gt;6)]-beta-D-Man-(1-&gt;4)-beta-D-GlcNAc-(1-&gt;4)-beta-D-GlcNAc}-L-asparaginyl-[protein] + 2 H2O = 2 alpha-D-mannopyranose + an N(4)-{beta-D-GlcNAc-(1-&gt;2)-alpha-D-Man-(1-&gt;3)-[alpha-D-Man-(1-&gt;6)]-beta-D-Man-(1-&gt;4)-beta-D-GlcNAc-(1-&gt;4)-beta-D-GlcNAc}-L-asparaginyl-[protein]. Its pathway is protein modification; protein glycosylation. Functionally, catalyzes the first committed step in the biosynthesis of complex N-glycans. It controls conversion of high mannose to complex N-glycans; the final hydrolytic step in the N-glycan maturation pathway. The protein is Alpha-mannosidase 2 (MAN2A1) of Homo sapiens (Human).